Reading from the N-terminus, the 61-residue chain is MAKKALVNKANKKPKFKVRGYTRCQRCGRPHAVFRKFGLCRICLREMAHAGELPGVQKSSW.

Zn(2+) is bound by residues Cys24, Cys27, Cys40, and Cys43.

This sequence belongs to the universal ribosomal protein uS14 family. Zinc-binding uS14 subfamily. As to quaternary structure, part of the 30S ribosomal subunit. Contacts proteins S3 and S10. Zn(2+) serves as cofactor.

In terms of biological role, binds 16S rRNA, required for the assembly of 30S particles and may also be responsible for determining the conformation of the 16S rRNA at the A site. This Mycobacterium sp. (strain JLS) protein is Small ribosomal subunit protein uS14.